An 89-amino-acid chain; its full sequence is Small ribosomal subunit protein uS17 (89 aa).

This sequence belongs to the universal ribosomal protein uS17 family. Part of the 30S ribosomal subunit.

One of the primary rRNA binding proteins, it binds specifically to the 5'-end of 16S ribosomal RNA. This is Small ribosomal subunit protein uS17 from Polynucleobacter asymbioticus (strain DSM 18221 / CIP 109841 / QLW-P1DMWA-1) (Polynucleobacter necessarius subsp. asymbioticus).